The primary structure comprises 321 residues: Biotin synthase (321 aa).

A Radical SAM core domain is found at tyrosine 45–alanine 271. Residues cysteine 63, cysteine 67, and cysteine 70 each coordinate [4Fe-4S] cluster. 4 residues coordinate [2Fe-2S] cluster: cysteine 106, cysteine 139, cysteine 199, and arginine 269.

It belongs to the radical SAM superfamily. Biotin synthase family. Homodimer. [4Fe-4S] cluster is required as a cofactor. It depends on [2Fe-2S] cluster as a cofactor.

It catalyses the reaction (4R,5S)-dethiobiotin + (sulfur carrier)-SH + 2 reduced [2Fe-2S]-[ferredoxin] + 2 S-adenosyl-L-methionine = (sulfur carrier)-H + biotin + 2 5'-deoxyadenosine + 2 L-methionine + 2 oxidized [2Fe-2S]-[ferredoxin]. It functions in the pathway cofactor biosynthesis; biotin biosynthesis; biotin from 7,8-diaminononanoate: step 2/2. In terms of biological role, catalyzes the conversion of dethiobiotin (DTB) to biotin by the insertion of a sulfur atom into dethiobiotin via a radical-based mechanism. The chain is Biotin synthase from Staphylococcus epidermidis (strain ATCC 35984 / DSM 28319 / BCRC 17069 / CCUG 31568 / BM 3577 / RP62A).